The sequence spans 377 residues: uncharacterized protein (377 aa).

Residues 1–23 (MLKFRNFFKLTLLTLASAFFLSG) form the signal peptide. Cys24 is lipidated: N-palmitoyl cysteine. The S-diacylglycerol cysteine moiety is linked to residue Cys24.

It is found in the cell membrane. This is an uncharacterized protein from Mycoplasma genitalium (strain ATCC 33530 / DSM 19775 / NCTC 10195 / G37) (Mycoplasmoides genitalium).